A 54-amino-acid polypeptide reads, in one-letter code: Ovomucoid (54 aa).

A Kazal-like domain is found at valine 4–cysteine 54. Disulfide bonds link cysteine 6–cysteine 36, cysteine 14–cysteine 33, and cysteine 22–cysteine 54. An N-linked (GlcNAc...) asparagine glycan is attached at asparagine 43.

The protein resides in the secreted. The polypeptide is Ovomucoid (Nycticorax nycticorax (Black-crowned night-heron)).